Here is a 213-residue protein sequence, read N- to C-terminus: Glutathione S-transferase (213 aa).

A GST N-terminal domain is found at 4–81 (AKPILYGAWI…YLEDKYPQHP (78 aa)). Residues 86–211 (DIKTKGLDLQ…LPQNQPDAPS (126 aa)) enclose the GST C-terminal domain.

The protein belongs to the GST superfamily. Zeta family.

Its subcellular location is the cytoplasm. It catalyses the reaction RX + glutathione = an S-substituted glutathione + a halide anion + H(+). Has a glutathione transferase activity with ethacrynic acid and nitrophenyl acetate. Has low glutathione peroxidase activity with cumene hydroperoxide. This is Glutathione S-transferase (GSTZ1) from Triticum aestivum (Wheat).